The sequence spans 330 residues: Transcription factor zip1 (330 aa).

Residues Ser133 to Glu148 are compositionally biased toward basic and acidic residues. Disordered stretches follow at residues Ser133–Ser165 and Pro238–Ala277. Residues Lys150–Ser165 are compositionally biased toward low complexity. Positions Lys244–Ile262 are enriched in polar residues. The region spanning Thr264 to Thr327 is the bZIP domain. Residues Lys270–Lys288 form a basic motif region. Residues Leu292–Leu320 form a leucine-zipper region.

It belongs to the bZIP family. Interacts with pof1.

The protein resides in the nucleus. In terms of biological role, mediates cell growth arrest in response to cadmium exposure, which is essential to maintain cell viability. Regulates cadmium stress specific genes. The sequence is that of Transcription factor zip1 (zip1) from Schizosaccharomyces pombe (strain 972 / ATCC 24843) (Fission yeast).